Consider the following 728-residue polypeptide: 1,4-alpha-glucan branching enzyme GlgB (728 aa).

Asp405 (nucleophile) is an active-site residue. Glu458 serves as the catalytic Proton donor.

It belongs to the glycosyl hydrolase 13 family. GlgB subfamily. In terms of assembly, monomer.

It carries out the reaction Transfers a segment of a (1-&gt;4)-alpha-D-glucan chain to a primary hydroxy group in a similar glucan chain.. It participates in glycan biosynthesis; glycogen biosynthesis. Its function is as follows. Catalyzes the formation of the alpha-1,6-glucosidic linkages in glycogen by scission of a 1,4-alpha-linked oligosaccharide from growing alpha-1,4-glucan chains and the subsequent attachment of the oligosaccharide to the alpha-1,6 position. The chain is 1,4-alpha-glucan branching enzyme GlgB from Salmonella typhi.